The following is a 113-amino-acid chain: Outer membrane protein assembly factor BamE (113 aa).

The first 19 residues, 1–19 (MRCKTLTAAAAVLLMLTAG), serve as a signal peptide directing secretion. Residue Cys-20 is the site of N-palmitoyl cysteine attachment. Cys-20 is lipidated: S-diacylglycerol cysteine.

This sequence belongs to the BamE family. As to quaternary structure, part of the Bam complex, which is composed of the outer membrane protein BamA, and four lipoproteins BamB, BamC, BamD and BamE.

It is found in the cell outer membrane. Part of the outer membrane protein assembly complex, which is involved in assembly and insertion of beta-barrel proteins into the outer membrane. The sequence is that of Outer membrane protein assembly factor BamE from Escherichia coli O6:H1 (strain CFT073 / ATCC 700928 / UPEC).